A 446-amino-acid polypeptide reads, in one-letter code: Butyryl-CoA:acetate CoA-transferase (446 aa).

CoA is bound at residue 220-224; that stretch reads GIGGM. The 5-glutamyl coenzyme A thioester intermediate role is filled by glutamate 245. CoA contacts are provided by valine 320, glycine 343, and lysine 370.

This sequence belongs to the acetyl-CoA hydrolase/transferase family. Butyryl-CoA CoA-transferase subfamily.

It catalyses the reaction butanoate + acetyl-CoA = butanoyl-CoA + acetate. It carries out the reaction propanoate + acetyl-CoA = propanoyl-CoA + acetate. It participates in lipid metabolism; butanoate metabolism. Coenzyme A-transferase that converts butyryl-CoA to butyrate. Can also use proprionyl-CoA as substrate in vitro. This Anaerostipes caccae (strain DSM 14662 / CCUG 47493 / JCM 13470 / NCIMB 13811 / L1-92) protein is Butyryl-CoA:acetate CoA-transferase.